A 302-amino-acid chain; its full sequence is ATP synthase gamma chain (302 aa).

Belongs to the ATPase gamma chain family. As to quaternary structure, F-type ATPases have 2 components, CF(1) - the catalytic core - and CF(0) - the membrane proton channel. CF(1) has five subunits: alpha(3), beta(3), gamma(1), delta(1), epsilon(1). CF(0) has three main subunits: a, b and c.

It localises to the cell membrane. Produces ATP from ADP in the presence of a proton gradient across the membrane. The gamma chain is believed to be important in regulating ATPase activity and the flow of protons through the CF(0) complex. The protein is ATP synthase gamma chain of Enterococcus faecalis (strain ATCC 700802 / V583).